A 976-amino-acid polypeptide reads, in one-letter code: 5'-3' exoribonuclease 2 homolog (976 aa).

The CCHC-type zinc-finger motif lies at 264–281 (RACELCGQYGHELKECRG). Over residues 411–420 (DEERFKENQK) the composition is skewed to basic and acidic residues. Residues 411-442 (DEERFKENQKNKKARMQQYGRGRGGRGRGRGQ) are disordered. The segment at 535–788 (DIRLYESGWK…GICVLYEDPE (254 aa)) is interaction with paxt-1. The segment at 815 to 976 (WNERRDGRFN…GGYQGNSSWR (162 aa)) is disordered. A compositionally biased stretch (low complexity) spans 856–866 (DRQGGNDNYRG).

This sequence belongs to the 5'-3' exonuclease family. XRN2/RAT1 subfamily. In terms of assembly, interacts with paxt-1 (via N-terminus); the interaction is direct and results in stabilization of xrn-2 in the complex.

The protein localises to the nucleus. Possesses 5'-&gt;3' exoribonuclease activity. Plays a role in maintenance of steady-state concentration and turnover of microRNAs (miRNA) by degradation of mature miRNA. Degradation role is enhanced when in complex with paxt-1. Partially redundant to xrn-1 in miRNA guide strand degradation. Implicated in differential regulation of mRNAs such as let-7 by controlling the accumulation of mature miRNA. Positively regulates molting of the pharyngeal cuticle. In Caenorhabditis briggsae, this protein is 5'-3' exoribonuclease 2 homolog.